Reading from the N-terminus, the 361-residue chain is Peptide chain release factor 1 (361 aa).

Gln237 is modified (N5-methylglutamine). The span at 283 to 296 (VEDEKRRSEEESTR) shows a compositional bias: basic and acidic residues. Positions 283–305 (VEDEKRRSEEESTRRNLVSSGDR) are disordered.

Belongs to the prokaryotic/mitochondrial release factor family. In terms of processing, methylated by PrmC. Methylation increases the termination efficiency of RF1.

It localises to the cytoplasm. Its function is as follows. Peptide chain release factor 1 directs the termination of translation in response to the peptide chain termination codons UAG and UAA. This chain is Peptide chain release factor 1, found in Shewanella woodyi (strain ATCC 51908 / MS32).